The chain runs to 311 residues: Malate dehydrogenase (311 aa).

NAD(+) is bound by residues 7 to 13 and Asp34; that span reads GAAGGIG. Positions 81 and 87 each coordinate substrate. Residues Asn94 and 117 to 119 contribute to the NAD(+) site; that span reads ITN. Substrate contacts are provided by Asn119 and Arg153. His177 (proton acceptor) is an active-site residue. NAD(+) is bound at residue Met227.

This sequence belongs to the LDH/MDH superfamily. MDH type 1 family. Homodimer.

It catalyses the reaction (S)-malate + NAD(+) = oxaloacetate + NADH + H(+). Catalyzes the reversible oxidation of malate to oxaloacetate. The polypeptide is Malate dehydrogenase (Shewanella sp. (strain MR-4)).